We begin with the raw amino-acid sequence, 293 residues long: Outer membrane protein assembly factor BamD (293 aa).

The N-terminal stretch at M1–G26 is a signal peptide. The N-palmitoyl cysteine moiety is linked to residue C27. Residue C27 is the site of S-diacylglycerol cysteine attachment.

The protein belongs to the BamD family. As to quaternary structure, part of the Bam complex.

It localises to the cell outer membrane. Part of the outer membrane protein assembly complex, which is involved in assembly and insertion of beta-barrel proteins into the outer membrane. This chain is Outer membrane protein assembly factor BamD, found in Xylella fastidiosa (strain Temecula1 / ATCC 700964).